Here is a 333-residue protein sequence, read N- to C-terminus: Phosphate acyltransferase (333 aa).

The protein belongs to the PlsX family. In terms of assembly, homodimer. Probably interacts with PlsY.

The protein resides in the cytoplasm. It catalyses the reaction a fatty acyl-[ACP] + phosphate = an acyl phosphate + holo-[ACP]. Its pathway is lipid metabolism; phospholipid metabolism. Functionally, catalyzes the reversible formation of acyl-phosphate (acyl-PO(4)) from acyl-[acyl-carrier-protein] (acyl-ACP). This enzyme utilizes acyl-ACP as fatty acyl donor, but not acyl-CoA. This chain is Phosphate acyltransferase, found in Thermoanaerobacterium thermosaccharolyticum (strain ATCC 7956 / DSM 571 / NCIMB 9385 / NCA 3814 / NCTC 13789 / WDCM 00135 / 2032) (Clostridium thermosaccharolyticum).